A 318-amino-acid chain; its full sequence is NADH-ubiquinone oxidoreductase chain 1 (318 aa).

8 helical membrane passes run 2–22, 70–90, 100–120, 136–156, 171–191, 231–251, 253–273, and 293–313; these read FFIN…FLTL, LFII…VPLP, LGIL…LWSG, VAQT…VLLM, HMWL…STLA, IILM…YINL, ELYS…FLWI, and FLPL…FTAG.

This sequence belongs to the complex I subunit 1 family. As to quaternary structure, core subunit of respiratory chain NADH dehydrogenase (Complex I) which is composed of 45 different subunits.

The protein localises to the mitochondrion inner membrane. The enzyme catalyses a ubiquinone + NADH + 5 H(+)(in) = a ubiquinol + NAD(+) + 4 H(+)(out). Core subunit of the mitochondrial membrane respiratory chain NADH dehydrogenase (Complex I) which catalyzes electron transfer from NADH through the respiratory chain, using ubiquinone as an electron acceptor. Essential for the catalytic activity and assembly of complex I. This Mus musculus (Mouse) protein is NADH-ubiquinone oxidoreductase chain 1 (Mtnd1).